A 458-amino-acid chain; its full sequence is Flap endonuclease 1 (458 aa).

The segment at 1-105 (MGIKGLTGLL…GVLSKRFEKR (105 aa)) is N-domain. Asp34 is a binding site for Mg(2+). DNA-binding residues include Arg47 and Arg71. Asp87, Glu159, Glu161, Asp180, and Asp182 together coordinate Mg(2+). An I-domain region spans residues 123-254 (DVDRFSRRTV…KSALKLIREF (132 aa)). A DNA-binding site is contributed by Glu159. Residues Gly232 and Asp234 each contribute to the DNA site. Asp234 provides a ligand contact to Mg(2+). Disordered stretches follow at residues 268–347 (AAAR…IPDE) and 416–458 (GFFT…AKKK). 2 stretches are compositionally biased toward acidic residues: residues 275 to 285 (AEEEDEEEAEE) and 293 to 309 (EMPD…DEEE). Residues 310–329 (AERRKKAEAAKKKKAQEKAK) show a composition bias toward basic and acidic residues. Positions 410–418 (QQGRLDGFF) are interaction with PCNA. A compositionally biased stretch (basic and acidic residues) spans 442 to 452 (RKGEDKAEGSG).

It belongs to the XPG/RAD2 endonuclease family. FEN1 subfamily. As to quaternary structure, interacts with PCNA. Three molecules of FEN1 bind to one PCNA trimer with each molecule binding to one PCNA monomer. PCNA stimulates the nuclease activity without altering cleavage specificity. Mg(2+) serves as cofactor. In terms of processing, phosphorylated. Phosphorylation upon DNA damage induces relocalization to the nuclear plasma.

The protein resides in the nucleus. Its subcellular location is the nucleolus. The protein localises to the nucleoplasm. It is found in the mitochondrion. In terms of biological role, structure-specific nuclease with 5'-flap endonuclease and 5'-3' exonuclease activities involved in DNA replication and repair. During DNA replication, cleaves the 5'-overhanging flap structure that is generated by displacement synthesis when DNA polymerase encounters the 5'-end of a downstream Okazaki fragment. It enters the flap from the 5'-end and then tracks to cleave the flap base, leaving a nick for ligation. Also involved in the long patch base excision repair (LP-BER) pathway, by cleaving within the apurinic/apyrimidinic (AP) site-terminated flap. Acts as a genome stabilization factor that prevents flaps from equilibrating into structures that lead to duplications and deletions. Also possesses 5'-3' exonuclease activity on nicked or gapped double-stranded DNA, and exhibits RNase H activity. Also involved in replication and repair of rDNA and in repairing mitochondrial DNA. The polypeptide is Flap endonuclease 1 (Coprinopsis cinerea (strain Okayama-7 / 130 / ATCC MYA-4618 / FGSC 9003) (Inky cap fungus)).